A 630-amino-acid chain; its full sequence is MNNFMKNIGFYLVLIALSILVAQFFVDTDVNTIVDTDVNTIKDFTYSDLINYVEQGKINEVTIIGNEAVKGTYNHREFNVPIPPEAVPDLMAELREADVEIKTEPEPTAPWWTGMLAYILPIILLIGAWFFIMQRMQGGGSQMMSFGKSRARLSENGKKVTFEDVANYEEVKEELQEVVEFLKNPDKFTRMGAKVPKGVLLVGPPGTGKTLLARAVAGEAGVPFFIISGSDFVEMFVGVGASRVRDLFEQGKKNAPCIIFIDELDAVGRQRGAGLGGGHDEREQTLNQLLVEMDGFEPNEGIIVMAATNRPDVLDPALLRPGRFDRQVVVDKPDVKGRMGILKIHLRNKPVADDVDVEVLAKRTPGFTGADMENLANEAAILAVRRRKNKITMEDFDDAIDKVIAGPAKKSKVMSERERKLVAYHETGHALVGDLLEHADRTHKISIVPRGRAGGMRWALPKEDKNFMSKQELLDQITVLLGGRASESIFLEDISTGAQNDLERATKLARAMVTEYGMSEKLGPLTLGHKHDEQIFLGRDISRQRNYSEEIAAEIDKEVSSIIEYCYQRAEKILQENTAKVERIVRELLDRETLDAEQLQKLIKGEPLDDDSIDNSTDENENREHENNDK.

Over 1–7 (MNNFMKN) the chain is Cytoplasmic. The helical transmembrane segment at 8-28 (IGFYLVLIALSILVAQFFVDT) threads the bilayer. Residues 29 to 111 (DVNTIVDTDV…KTEPEPTAPW (83 aa)) lie on the Periplasmic side of the membrane. A helical membrane pass occupies residues 112 to 132 (WTGMLAYILPIILLIGAWFFI). Topologically, residues 133–630 (MQRMQGGGSQ…ENREHENNDK (498 aa)) are cytoplasmic. 203–210 (GPPGTGKT) provides a ligand contact to ATP. H425 is a Zn(2+) binding site. The active site involves E426. 2 residues coordinate Zn(2+): H429 and D501. The interval 601 to 630 (KLIKGEPLDDDSIDNSTDENENREHENNDK) is disordered. The span at 608–619 (LDDDSIDNSTDE) shows a compositional bias: acidic residues. A compositionally biased stretch (basic and acidic residues) spans 620-630 (NENREHENNDK).

This sequence in the central section; belongs to the AAA ATPase family. In the C-terminal section; belongs to the peptidase M41 family. As to quaternary structure, homohexamer. The cofactor is Zn(2+).

Its subcellular location is the cell inner membrane. Its function is as follows. Acts as a processive, ATP-dependent zinc metallopeptidase for both cytoplasmic and membrane proteins. Plays a role in the quality control of integral membrane proteins. The sequence is that of ATP-dependent zinc metalloprotease FtsH from Halothermothrix orenii (strain H 168 / OCM 544 / DSM 9562).